The following is a 71-amino-acid chain: Equinin B (71 aa).

Residues 1–11 (MAVIMVDQAEG) form the signal peptide. The propeptide occupies 46 to 71 (GDEPQQMALDDESDPLVILPNNYNDY).

In terms of processing, contains 4 disulfide bonds.

It localises to the secreted. Its subcellular location is the target cell membrane. Antimicrobial peptide with inhibitory activity against both Gram-positive and Gram-negative bacteria (E.coli (MIC=0.25 ug/ml), M.lysodeikticus (MIC=0.25 ug/ml), and V.alginolyticus (MIC=0.25 ug/ml)). Does not show hemolytic activity. In Actinia equina (Beadlet anemone), this protein is Equinin B.